Here is a 542-residue protein sequence, read N- to C-terminus: Ribulokinase 2 (542 aa).

This sequence belongs to the ribulokinase family.

The catalysed reaction is D-ribulose + ATP = D-ribulose 5-phosphate + ADP + H(+). It catalyses the reaction L-ribulose + ATP = L-ribulose 5-phosphate + ADP + H(+). It functions in the pathway carbohydrate degradation; L-arabinose degradation via L-ribulose; D-xylulose 5-phosphate from L-arabinose (bacterial route): step 2/3. The sequence is that of Ribulokinase 2 from Staphylococcus saprophyticus subsp. saprophyticus (strain ATCC 15305 / DSM 20229 / NCIMB 8711 / NCTC 7292 / S-41).